Consider the following 382-residue polypeptide: D-galactonate dehydratase (382 aa).

Position 183 (Asp183) interacts with Mg(2+). His185 acts as the Proton donor in catalysis. Mg(2+)-binding residues include Glu209 and Glu235. The active-site Proton acceptor is His285.

The protein belongs to the mandelate racemase/muconate lactonizing enzyme family. GalD subfamily. The cofactor is Mg(2+).

The catalysed reaction is D-galactonate = 2-dehydro-3-deoxy-D-galactonate + H2O. It participates in carbohydrate acid metabolism; D-galactonate degradation; D-glyceraldehyde 3-phosphate and pyruvate from D-galactonate: step 1/3. Catalyzes the dehydration of D-galactonate to 2-keto-3-deoxy-D-galactonate. The polypeptide is D-galactonate dehydratase (Ralstonia nicotianae (strain ATCC BAA-1114 / GMI1000) (Ralstonia solanacearum)).